The chain runs to 531 residues: Acyl-CoA ligase azaF (531 aa).

Position 188 to 199 (188 to 199 (RLFSSGTTGLPK)) interacts with AMP. The tract at residues 449 to 525 (EVEGVLRNHP…DAIPRNASGK (77 aa)) is AMP-binding.

Belongs to the ATP-dependent AMP-binding enzyme family.

Its pathway is secondary metabolite biosynthesis. Functionally, acyl-CoA ligase; part of the gene cluster that mediates the biosynthesis of azaphilones, a class of fungal metabolites characterized by a highly oxygenated pyrano-quinone bicyclic core and exhibiting a broad range of bioactivities. In the first step, the non-reducing polyketide synthase azaA forms the hexaketide precursor from successive condensations of five malonyl-CoA units, presumably with a simple acetyl-CoA starter unit. The reactive polyketide chain then undergoes a PT-mediated C2-C7 cyclization to afford the aromatic ring and is eventually released as an aldehyde through the R-domain. The putative ketoreductase azaE is proposed to catalyze the reduction of the terminal ketone resulting in the early culture product FK17-P2a. The monooxygenase azaH was demonstrated to be the only enzyme required to convert FK17-P2a to azanigerone E. AzaH first hydroxylates the benzaldehyde intermediate FK17-P2a at C4, which triggers the formation of the pyran-ring to afford azanigerone E. In parallel, the 2,4-dimethylhexanoyl chain is synthesized by the HR-PKS azaB and is proposed to be transferred to the C4-hydroxyl of azanigerone E by the acyltransferase azaD directly from the ACP domain of azaB. Alternatively, the 2,4-dimethyl-hexanoyl chain may be offloaded from the HR-PKS as a carboxylic acid and converted to an acyl-CoA by azaF. The resulting acyl-CoA molecule could then be taken up as a substrate by AzaD to form azanigerone B. To yield the carboxylic acid substituent in azanigerone A, the hydroxypropyl side chain of azanigerone B would need to undergo a C-C oxidative cleavage catalyzed by cytochrome P450 AzaI. AzaI is proposed to act on a vicinal diol that leads to a C-C bond scission either through an alkoxyradical intermediate or a peroxy complex. In the biosynthesis of azanigerone A, azanigerone B first undergoes hydroxylation at C10, possibly catalyzed by one of the two FAD-dependent monooxygenases encoded in the cluster, azaG or azaL, resulting in the vicinal diol azanigerone C. Oxidative cleavage of azanigerone C by azaI would yield the corresponding aldehyde derivative of azanigerone A. Finally, the dehydrogenase azaJ is proposed to convert the aldehyde functional group into the carboxylic acid, completing the conversion from azanigerone B to azanigerone A. Alternatively, the oxidation of aldehyde to carboxylic acid may be catalyzed by the same P450 enzyme azaI via consecutive oxidation or by endogenous alcohol dehydrogenase. This chain is Acyl-CoA ligase azaF, found in Aspergillus niger (strain ATCC 1015 / CBS 113.46 / FGSC A1144 / LSHB Ac4 / NCTC 3858a / NRRL 328 / USDA 3528.7).